Here is a 400-residue protein sequence, read N- to C-terminus: 3-phenylpropionate/cinnamic acid dioxygenase ferredoxin--NAD(+) reductase component (400 aa).

Residue threonine 5–aspartate 36 coordinates FAD. Position 146–174 (serine 146–glutamate 174) interacts with NAD(+).

It belongs to the bacterial ring-hydroxylating dioxygenase ferredoxin reductase family. In terms of assembly, this dioxygenase system consists of four proteins: the two subunits of the hydroxylase component (HcaE and HcaF), a ferredoxin (HcaC) and a ferredoxin reductase (HcaD). Requires FAD as cofactor.

The catalysed reaction is 2 reduced [2Fe-2S]-[ferredoxin] + NAD(+) + H(+) = 2 oxidized [2Fe-2S]-[ferredoxin] + NADH. It functions in the pathway aromatic compound metabolism; 3-phenylpropanoate degradation. Part of the multicomponent 3-phenylpropionate dioxygenase, that converts 3-phenylpropionic acid (PP) and cinnamic acid (CI) into 3-phenylpropionate-dihydrodiol (PP-dihydrodiol) and cinnamic acid-dihydrodiol (CI-dihydrodiol), respectively. The protein is 3-phenylpropionate/cinnamic acid dioxygenase ferredoxin--NAD(+) reductase component of Shigella sonnei (strain Ss046).